The chain runs to 174 residues: Co-chaperone protein HscB homolog (174 aa).

The J domain maps to 2-74 (NYFELFKFSP…IRRAEHMLSL (73 aa)).

This sequence belongs to the HscB family. In terms of assembly, interacts with HscA and stimulates its ATPase activity.

Functionally, co-chaperone involved in the maturation of iron-sulfur cluster-containing proteins. Seems to help targeting proteins to be folded toward HscA. The polypeptide is Co-chaperone protein HscB homolog (Shewanella sp. (strain MR-4)).